Reading from the N-terminus, the 443-residue chain is Proline--tRNA ligase (443 aa).

Belongs to the class-II aminoacyl-tRNA synthetase family. ProS type 2 subfamily. In terms of assembly, homodimer.

It is found in the cytoplasm. The catalysed reaction is tRNA(Pro) + L-proline + ATP = L-prolyl-tRNA(Pro) + AMP + diphosphate. Its function is as follows. Catalyzes the attachment of proline to tRNA(Pro) in a two-step reaction: proline is first activated by ATP to form Pro-AMP and then transferred to the acceptor end of tRNA(Pro). The protein is Proline--tRNA ligase of Zymomonas mobilis subsp. mobilis (strain ATCC 10988 / DSM 424 / LMG 404 / NCIMB 8938 / NRRL B-806 / ZM1).